Reading from the N-terminus, the 268-residue chain is Indole-3-glycerol phosphate synthase 2 (268 aa).

It belongs to the TrpC family.

It catalyses the reaction 1-(2-carboxyphenylamino)-1-deoxy-D-ribulose 5-phosphate + H(+) = (1S,2R)-1-C-(indol-3-yl)glycerol 3-phosphate + CO2 + H2O. The protein operates within amino-acid biosynthesis; L-tryptophan biosynthesis; L-tryptophan from chorismate: step 4/5. In Ralstonia nicotianae (strain ATCC BAA-1114 / GMI1000) (Ralstonia solanacearum), this protein is Indole-3-glycerol phosphate synthase 2 (trpC2).